A 177-amino-acid chain; its full sequence is Large ribosomal subunit protein uL6 (177 aa).

It belongs to the universal ribosomal protein uL6 family. As to quaternary structure, part of the 50S ribosomal subunit.

This protein binds to the 23S rRNA, and is important in its secondary structure. It is located near the subunit interface in the base of the L7/L12 stalk, and near the tRNA binding site of the peptidyltransferase center. This chain is Large ribosomal subunit protein uL6, found in Salmonella dublin (strain CT_02021853).